Here is a 442-residue protein sequence, read N- to C-terminus: Glutamyl-tRNA reductase (442 aa).

Substrate contacts are provided by residues 50-53, S109, 114-116, and Q120; these read TCNR and EPQ. C51 (nucleophile) is an active-site residue. 189 to 194 is a binding site for NADP(+); the sequence is GAGEMA.

Belongs to the glutamyl-tRNA reductase family. In terms of assembly, homodimer.

The catalysed reaction is (S)-4-amino-5-oxopentanoate + tRNA(Glu) + NADP(+) = L-glutamyl-tRNA(Glu) + NADPH + H(+). Its pathway is porphyrin-containing compound metabolism; protoporphyrin-IX biosynthesis; 5-aminolevulinate from L-glutamyl-tRNA(Glu): step 1/2. Catalyzes the NADPH-dependent reduction of glutamyl-tRNA(Glu) to glutamate 1-semialdehyde (GSA). The sequence is that of Glutamyl-tRNA reductase from Nitratidesulfovibrio vulgaris (strain DSM 19637 / Miyazaki F) (Desulfovibrio vulgaris).